The following is a 494-amino-acid chain: Glutamyl-tRNA(Gln) amidotransferase subunit A (494 aa).

Active-site charge relay system residues include K81 and S156. The active-site Acyl-ester intermediate is the S180.

It belongs to the amidase family. GatA subfamily. In terms of assembly, heterotrimer of A, B and C subunits.

It carries out the reaction L-glutamyl-tRNA(Gln) + L-glutamine + ATP + H2O = L-glutaminyl-tRNA(Gln) + L-glutamate + ADP + phosphate + H(+). Allows the formation of correctly charged Gln-tRNA(Gln) through the transamidation of misacylated Glu-tRNA(Gln) in organisms which lack glutaminyl-tRNA synthetase. The reaction takes place in the presence of glutamine and ATP through an activated gamma-phospho-Glu-tRNA(Gln). The polypeptide is Glutamyl-tRNA(Gln) amidotransferase subunit A (Mycobacterium bovis (strain ATCC BAA-935 / AF2122/97)).